Reading from the N-terminus, the 405-residue chain is 11-beta-hydroxysteroid dehydrogenase type 2 (405 aa).

NAD(+) is bound at residue 82-111; sequence TRAVLITGCDSGFGKETAKKLDSMGFTVLA. Residue Ser-219 coordinates substrate. Tyr-232 serves as the catalytic Proton acceptor. The essential for protein stability stretch occupies residues 335 to 339; it reads RRRYY. A compositionally biased stretch (low complexity) spans 377-387; that stretch reads QPGQPGTTPPQ. The interval 377 to 405 is disordered; it reads QPGQPGTTPPQDAAQDPNLSPGPSPAVAR. Over residues 396–405 the composition is skewed to pro residues; the sequence is SPGPSPAVAR.

The protein belongs to the short-chain dehydrogenases/reductases (SDR) family. As to quaternary structure, interacts with ligand-free cytoplasmic NR3C2. As to expression, expressed in kidney, placenta, pancreas, prostate, ovary, small intestine and colon, and in lower levels in the spleen and testis. At midgestation, expressed at high levels in placenta and in fetal kidney and, at much lower levels, in fetal lung and testis.

The protein localises to the microsome. Its subcellular location is the endoplasmic reticulum. It carries out the reaction an 11beta-hydroxysteroid + NAD(+) = an 11-oxosteroid + NADH + H(+). The enzyme catalyses cortisol + NAD(+) = cortisone + NADH + H(+). The catalysed reaction is corticosterone + NAD(+) = 11-dehydrocorticosterone + NADH + H(+). It catalyses the reaction 11beta,17beta-dihydroxyandrost-4-ene-3-one + NAD(+) = 17beta-hydroxyandrost-4-ene-3,11-dione + NADH + H(+). It carries out the reaction 11beta-hydroxyandrost-4-ene-3,17-dione + NAD(+) = androst-4-ene-3,11,17-trione + NADH + H(+). It participates in steroid metabolism. With respect to regulation, inhibited by glycyrrhetinic acid (derived from liquorice). In terms of biological role, catalyzes the conversion of biologically active 11beta-hydroxyglucocorticoids (11beta-hydroxysteroid) such as cortisol, to inactive 11-ketoglucocorticoids (11-oxosteroid) such as cortisone, in the presence of NAD(+). Functions as a dehydrogenase (oxidase), thereby decreasing the concentration of active glucocorticoids, thus protecting the nonselective mineralocorticoid receptor from occupation by glucocorticoids. Plays an important role in maintaining glucocorticoids balance during preimplantation and protects the fetus from excessive maternal corticosterone exposure. Catalyzes the oxidation of 11beta-hydroxytestosterone (11beta,17beta-dihydroxyandrost-4-ene-3-one) to 11-ketotestosterone (17beta-hydroxyandrost-4-ene-3,11-dione), a major bioactive androgen. Catalyzes the conversion of 11beta-hydroxyandrostenedione (11beta-hydroxyandrost-4-ene-3,17-dione) to 11-ketoandrostenedione (androst-4-ene-3,11,17-trione), which can be further metabolized to 11-ketotestosterone. Converts 7-beta-25-dihydroxycholesterol to 7-oxo-25-hydroxycholesterol in vitro. 7-beta-25-dihydroxycholesterol (not 7-oxo-25-hydroxycholesterol) acts as a ligand for the G-protein-coupled receptor (GPCR) Epstein-Barr virus-induced gene 2 (EBI2) and may thereby regulate immune cell migration. May protect ovulating oocytes and fertilizing spermatozoa from the adverse effects of cortisol. The polypeptide is 11-beta-hydroxysteroid dehydrogenase type 2 (Homo sapiens (Human)).